Reading from the N-terminus, the 682-residue chain is Probable glycosyl transferase Gly (682 aa).

UDP-binding positions include 21-26 and 112-113; these read CASFSD and DC. Mn(2+) is bound by residues aspartate 112, aspartate 114, and histidine 230. UDP is bound at residue 230 to 236; that stretch reads HYLPERK.

The protein belongs to the glycosyltransferase 8 family. In terms of assembly, part of the accessory SecA2/SecY2 protein translocation apparatus required to export cell wall protein GspB.

Its function is as follows. Part of the accessory SecA2/SecY2 system specifically required to export GspB, a serine-rich repeat cell wall protein encoded upstream in the same operon. This is Probable glycosyl transferase Gly (gly) from Streptococcus gordonii.